We begin with the raw amino-acid sequence, 463 residues long: V-type proton ATPase subunit S1 (463 aa).

A signal peptide spans 1-32 (MMAATVVSRIRTGTGRAPVMWLSLSLVAVAAA). Positions 33–225 (VATEQQVPLV…TAVRPSRVAR (193 aa)) are excised as a propeptide. The Lumenal portion of the chain corresponds to 33-412 (VATEQQVPLV…EQFSYASDCA (380 aa)). Asparagine 164, asparagine 255, asparagine 267, asparagine 290, asparagine 297, asparagine 344, asparagine 351, and asparagine 399 each carry an N-linked (GlcNAc...) asparagine glycan. The cysteines at positions 365 and 411 are disulfide-linked. The helical transmembrane segment at 413–433 (GFFSPGIWMGLLTTLFMLFIF) threads the bilayer. Residues 434–463 (TYGLHMILSLKTMDRFDDHKGPTITLTQIV) lie on the Cytoplasmic side of the membrane.

The protein belongs to the vacuolar ATPase subunit S1 family. Accessory component of the multisubunit proton-transporting vacuolar (V)-ATPase protein pump. Interacts (via N-terminus) with ATP6AP2 (via N-terminus). Interacts with RNASEK. Interacts with TMEM106B (via C-terminus). Post-translationally, N-glycosylated. Expressed in brain cortex (at protein level). Highly expressed in islets of Langerhans. Expressed in pancreatic acini, pituitary gland, adrenal gland, lung, brain and bone marrow.

The protein resides in the endoplasmic reticulum membrane. It localises to the endoplasmic reticulum-Golgi intermediate compartment membrane. The protein localises to the cytoplasmic vesicle. It is found in the secretory vesicle. Its subcellular location is the synaptic vesicle membrane. The protein resides in the clathrin-coated vesicle membrane. Functionally, accessory subunit of the proton-transporting vacuolar (V)-ATPase protein pump, which is required for luminal acidification of secretory vesicles. Guides the V-type ATPase into specialized subcellular compartments, such as neuroendocrine regulated secretory vesicles or the ruffled border of the osteoclast, thereby regulating its activity. Involved in membrane trafficking and Ca(2+)-dependent membrane fusion. May play a role in the assembly of the V-type ATPase complex. In aerobic conditions, involved in intracellular iron homeostasis, thus triggering the activity of Fe(2+) prolyl hydroxylase (PHD) enzymes, and leading to HIF1A hydroxylation and subsequent proteasomal degradation. In islets of Langerhans cells, may regulate the acidification of dense-core secretory granules. This is V-type proton ATPase subunit S1 (Atp6ap1) from Mus musculus (Mouse).